Consider the following 507-residue polypeptide: Protein zntA (507 aa).

Positions 1–18 are cleaved as a signal peptide; it reads MSIFAYSILAGLAPLLSS. Residue Asn-31 is glycosylated (N-linked (GlcNAc...) asparagine). The helical transmembrane segment at 35–55 threads the bilayer; it reads FHILLCISAGLLFAVASLELI. The segment at 124 to 179 is disordered; that stretch reads GLNLNNLNQATNLDNNEEDNDNLDNDGENEIENDHDHDHQEDEGGDNDHDHESEEK. Residues 125–137 are compositionally biased toward low complexity; sequence LNLNNLNQATNLD. Positions 138–154 are enriched in acidic residues; that stretch reads NNEEDNDNLDNDGENEI. Positions 155-179 are enriched in basic and acidic residues; the sequence is ENDHDHDHQEDEGGDNDHDHESEEK. Residues 185-205 traverse the membrane as a helical segment; it reads IPMYGIGFGFAILIIVESIFS. The tract at residues 209-264 is disordered; it reads GGGGGGGHHSHSHGSLSSSSSNDVISDYISNNNSNNINNNDDDNNNNNNNNDDDDD. The span at 221–258 shows a compositional bias: low complexity; sequence HGSLSSSSSNDVISDYISNNNSNNINNNDDDNNNNNNN. 5 N-linked (GlcNAc...) asparagine glycosylation sites follow: Asn-240, Asn-298, Asn-328, Asn-342, and Asn-351. Residues 305–350 form a disordered region; that stretch reads PNIASPVMNKDNNNNDKDKNRNSNKSDIKNSGSINNGNNSGNNNNN. Residues 317-332 are compositionally biased toward basic and acidic residues; the sequence is NNNDKDKNRNSNKSDI. Positions 333-350 are enriched in low complexity; sequence KNSGSINNGNNSGNNNNN. Transmembrane regions (helical) follow at residues 355–375, 388–408, 422–442, 451–471, and 486–506; these read LTIT…VVIS, VALA…SLIL, FFYF…SSFL, GAFV…TAIL, and LFSI…FHGA.

Belongs to the ZIP transporter (TC 2.A.5) family.

It is found in the membrane. Functionally, may transport divalent cations. May participate, with dstA, in the regulation of the differentiation of stalk cells during development. The protein is Protein zntA (zntA) of Dictyostelium discoideum (Social amoeba).